The sequence spans 422 residues: Phospholipase D Z (422 aa).

The N-terminal stretch at 1-18 is a signal peptide; that stretch reads MMMKLLFLIALFGCVVNS. Asparagine 53 carries N-linked (GlcNAc...) asparagine glycosylation. One can recognise a PLD phosphodiesterase 1 domain in the interval 148 to 175; it reads GAGILHTKVIVVDQVSAYLGSANLDWRS. Active-site residues include histidine 153, lysine 155, and aspartate 160. Residues asparagine 225 and asparagine 320 are each glycosylated (N-linked (GlcNAc...) asparagine). Residues 357-383 form the PLD phosphodiesterase 2 domain; sequence FTRVNHAKYMVTDEQSYVGTSNWSEDY. Residues histidine 362, lysine 364, and aspartate 369 contribute to the active site. A glycan (N-linked (GlcNAc...) asparagine) is linked at asparagine 378.

The protein belongs to the phospholipase D family.

The catalysed reaction is a 1,2-diacyl-sn-glycero-3-phosphocholine + H2O = a 1,2-diacyl-sn-glycero-3-phosphate + choline + H(+). With respect to regulation, inhibited by butan-1-ol. Functionally, hydrolyzes membrane phospholipids, such as PtdCho (phosphatidylcholine), producing the free headgroup and PtdOH (phosphatidic acid; signaling molecule on its own). In Dictyostelium discoideum (Social amoeba), this protein is Phospholipase D Z (pldZ).